Consider the following 282-residue polypeptide: MAWFKKSKAPIVPVESKKVKMPEGVWRKCPHCNEIIYAKEIERNLNVCPKCDYHFRISARERIALVLDEGSFVERDAGMKSVDFLEFKDGKRYRDRISAAIKKSGLNDAVIWGEGAIEAQPVVVAVFDFSFMGGSMGSVVGEKITRAVEKALENRCPCLVFSSSGGARMQESIMSLMQMAKTSAALSRLKEAGLPYISIMTDPTTGGVTASFAMLGDVNMAEPRALIGFAGPRVIEQTIRQKLPEGFQRSEYLLEHGMIDMIVRRPEMKARLSQMLRIFMKQ.

Residues 25-282 (VWRKCPHCNE…SQMLRIFMKQ (258 aa)) form the CoA carboxyltransferase N-terminal domain. The Zn(2+) site is built by cysteine 29, cysteine 32, cysteine 48, and cysteine 51. Residues 29-51 (CPHCNEIIYAKEIERNLNVCPKC) form a C4-type zinc finger.

This sequence belongs to the AccD/PCCB family. Acetyl-CoA carboxylase is a heterohexamer composed of biotin carboxyl carrier protein (AccB), biotin carboxylase (AccC) and two subunits each of ACCase subunit alpha (AccA) and ACCase subunit beta (AccD). Zn(2+) serves as cofactor.

The protein resides in the cytoplasm. It carries out the reaction N(6)-carboxybiotinyl-L-lysyl-[protein] + acetyl-CoA = N(6)-biotinyl-L-lysyl-[protein] + malonyl-CoA. The protein operates within lipid metabolism; malonyl-CoA biosynthesis; malonyl-CoA from acetyl-CoA: step 1/1. Component of the acetyl coenzyme A carboxylase (ACC) complex. Biotin carboxylase (BC) catalyzes the carboxylation of biotin on its carrier protein (BCCP) and then the CO(2) group is transferred by the transcarboxylase to acetyl-CoA to form malonyl-CoA. The chain is Acetyl-coenzyme A carboxylase carboxyl transferase subunit beta from Syntrophotalea carbinolica (strain DSM 2380 / NBRC 103641 / GraBd1) (Pelobacter carbinolicus).